The sequence spans 85 residues: UPF0297 protein Cbei_1105 (85 aa).

This sequence belongs to the UPF0297 family.

This chain is UPF0297 protein Cbei_1105, found in Clostridium beijerinckii (strain ATCC 51743 / NCIMB 8052) (Clostridium acetobutylicum).